We begin with the raw amino-acid sequence, 245 residues long: Uridylate kinase (245 aa).

Lysine 12–glycine 15 serves as a coordination point for ATP. Residue glycine 55 coordinates UMP. ATP is bound by residues glycine 56 and arginine 60. Residues aspartate 76 and alanine 137–threonine 144 contribute to the UMP site. ATP is bound by residues threonine 164, tyrosine 171, and aspartate 174.

This sequence belongs to the UMP kinase family. As to quaternary structure, homohexamer.

Its subcellular location is the cytoplasm. The catalysed reaction is UMP + ATP = UDP + ADP. Its pathway is pyrimidine metabolism; CTP biosynthesis via de novo pathway; UDP from UMP (UMPK route): step 1/1. Inhibited by UTP. Catalyzes the reversible phosphorylation of UMP to UDP. This chain is Uridylate kinase, found in Chlamydia muridarum (strain MoPn / Nigg).